The following is a 406-amino-acid chain: Phosphorylase b kinase gamma catalytic chain, liver/testis isoform (406 aa).

Residues 24–291 (YDPKDIIGRG…AEQALQHPFF (268 aa)) form the Protein kinase domain. ATP-binding positions include 30 to 38 (IGRGVSSVV) and Lys53. Asp153 serves as the catalytic Proton acceptor. The segment at 306–330 (QRFRVAVWTILAAGRVALSSHRLRP) is calmodulin-binding (domain-N). The tract at residues 346–370 (VRRLIDNCAFRLYGHWVKKGEQQNR) is calmodulin-binding (domain-C).

Belongs to the protein kinase superfamily. CAMK Ser/Thr protein kinase family. As to quaternary structure, hexadecamer of 4 heterotetramers, each composed of alpha, beta, gamma, and delta subunits. Alpha (PHKA1 or PHKA2) and beta (PHKB) are regulatory subunits, gamma (PHKG1 or PHKG2) is the catalytic subunit, and delta is calmodulin.

The enzyme catalyses 2 ATP + phosphorylase b = 2 ADP + phosphorylase a.. Its function is as follows. Catalytic subunit of the phosphorylase b kinase (PHK), which mediates the neural and hormonal regulation of glycogen breakdown (glycogenolysis) by phosphorylating and thereby activating glycogen phosphorylase. May regulate glycogeneolysis in the testis. In vitro, phosphorylates PYGM. The polypeptide is Phosphorylase b kinase gamma catalytic chain, liver/testis isoform (Phkg2) (Mus musculus (Mouse)).